The chain runs to 328 residues: dITP/XTP pyrophosphatase (328 aa).

The segment at 1–129 is unknown; sequence MSEKIYEYKD…ATSEQGFGDT (129 aa). An NTP pyrophosphatase region spans residues 130–324; that stretch reads ILIATRNEGK…KLMEVFPAWQ (195 aa). Residue 134–139 participates in substrate binding; that stretch reads TRNEGK. The Proton acceptor role is filled by D196. D196 lines the Mg(2+) pocket. Substrate contacts are provided by residues S197, 280-283, K303, and 308-309; these read FGYD and HR.

The protein belongs to the HAM1 NTPase family. Homodimer. Requires Mg(2+) as cofactor.

The enzyme catalyses XTP + H2O = XMP + diphosphate + H(+). It catalyses the reaction dITP + H2O = dIMP + diphosphate + H(+). It carries out the reaction ITP + H2O = IMP + diphosphate + H(+). In terms of biological role, pyrophosphatase that catalyzes the hydrolysis of nucleoside triphosphates to their monophosphate derivatives, with a high preference for the non-canonical purine nucleotides XTP (xanthosine triphosphate), dITP (deoxyinosine triphosphate) and ITP. Seems to function as a house-cleaning enzyme that removes non-canonical purine nucleotides from the nucleotide pool, thus preventing their incorporation into DNA/RNA and avoiding chromosomal lesions. This chain is dITP/XTP pyrophosphatase, found in Streptococcus pyogenes serotype M6 (strain ATCC BAA-946 / MGAS10394).